A 222-amino-acid polypeptide reads, in one-letter code: N-(5'-phosphoribosyl)anthranilate isomerase (222 aa).

Belongs to the TrpF family.

It carries out the reaction N-(5-phospho-beta-D-ribosyl)anthranilate = 1-(2-carboxyphenylamino)-1-deoxy-D-ribulose 5-phosphate. It functions in the pathway amino-acid biosynthesis; L-tryptophan biosynthesis; L-tryptophan from chorismate: step 3/5. The chain is N-(5'-phosphoribosyl)anthranilate isomerase from Brucella abortus (strain S19).